Reading from the N-terminus, the 234-residue chain is Leucyl/phenylalanyl-tRNA--protein transferase (234 aa).

It belongs to the L/F-transferase family.

It localises to the cytoplasm. It catalyses the reaction N-terminal L-lysyl-[protein] + L-leucyl-tRNA(Leu) = N-terminal L-leucyl-L-lysyl-[protein] + tRNA(Leu) + H(+). It carries out the reaction N-terminal L-arginyl-[protein] + L-leucyl-tRNA(Leu) = N-terminal L-leucyl-L-arginyl-[protein] + tRNA(Leu) + H(+). The enzyme catalyses L-phenylalanyl-tRNA(Phe) + an N-terminal L-alpha-aminoacyl-[protein] = an N-terminal L-phenylalanyl-L-alpha-aminoacyl-[protein] + tRNA(Phe). In terms of biological role, functions in the N-end rule pathway of protein degradation where it conjugates Leu, Phe and, less efficiently, Met from aminoacyl-tRNAs to the N-termini of proteins containing an N-terminal arginine or lysine. This chain is Leucyl/phenylalanyl-tRNA--protein transferase, found in Klebsiella pneumoniae (strain 342).